The sequence spans 1013 residues: GTPase-activating protein BEM3 (1013 aa).

Disordered regions lie at residues 90–197, 258–277, 282–301, and 307–421; these read TVVE…GSPA, GSRYDTERAGGPGPLSPESI, SDLQEHQPSDLSSTTRTDLG, and VDTT…HQSK. A compositionally biased stretch (polar residues) spans 143–160; it reads QEATSGAQQVPLLTSSKS. Polar residues-rich tracts occupy residues 309 to 319, 333 to 388, and 404 to 418; these read TTFNAEDNPTG, TLQN…TSSN, and KSYSQHSGSPHSNSH. A PH domain is found at 555 to 662; the sequence is EFAKEGMLLV…WISVLTTLCD (108 aa). The disordered stretch occupies residues 702–726; sequence AMDATSPTRPNDPNPVSLTSEEEKE. Polar residues predominate over residues 706–720; that stretch reads TSPTRPNDPNPVSLT. In terms of domain architecture, Rho-GAP spans 799–1013; that stretch reads LQLSSHPYQG…PPVNIHIPQI (215 aa).

The protein localises to the cytoplasm. Functionally, GTPase-activating protein (GAP) for CDC42 and less efficiently for RHO1. Negative regulator of the pheromone-response pathway through the STE20 protein kinase. The protein is GTPase-activating protein BEM3 (BEM3) of Eremothecium gossypii (strain ATCC 10895 / CBS 109.51 / FGSC 9923 / NRRL Y-1056) (Yeast).